A 460-amino-acid chain; its full sequence is Fumarate hydratase class II (460 aa).

Residues 95–97, 126–129, 136–138, and threonine 184 contribute to the substrate site; these read SGT, HPND, and SSN. Histidine 185 functions as the Proton donor/acceptor in the catalytic mechanism. Serine 315 is a catalytic residue. Residues serine 316 and 321-323 each bind substrate; that span reads KVN.

Belongs to the class-II fumarase/aspartase family. Fumarase subfamily. In terms of assembly, homotetramer.

The protein localises to the cytoplasm. The catalysed reaction is (S)-malate = fumarate + H2O. The protein operates within carbohydrate metabolism; tricarboxylic acid cycle; (S)-malate from fumarate: step 1/1. In terms of biological role, involved in the TCA cycle. Catalyzes the stereospecific interconversion of fumarate to L-malate. The chain is Fumarate hydratase class II from Chlamydia pneumoniae (Chlamydophila pneumoniae).